We begin with the raw amino-acid sequence, 430 residues long: Ribosomal protein uS12 methylthiotransferase RimO (430 aa).

The MTTase N-terminal domain occupies 4–119 (LKINFISLGC…IPVLFDIKPK (116 aa)). 6 residues coordinate [4Fe-4S] cluster: Cys13, Cys49, Cys82, Cys141, Cys145, and Cys148. A Radical SAM core domain is found at 127–358 (STPKHTAYLK…SALQENITEQ (232 aa)). The 70-residue stretch at 361-430 (KSLIGKELDI…DKYDVVGEAE (70 aa)) folds into the TRAM domain.

This sequence belongs to the methylthiotransferase family. RimO subfamily. [4Fe-4S] cluster is required as a cofactor.

The protein localises to the cytoplasm. The enzyme catalyses L-aspartate(89)-[ribosomal protein uS12]-hydrogen + (sulfur carrier)-SH + AH2 + 2 S-adenosyl-L-methionine = 3-methylsulfanyl-L-aspartate(89)-[ribosomal protein uS12]-hydrogen + (sulfur carrier)-H + 5'-deoxyadenosine + L-methionine + A + S-adenosyl-L-homocysteine + 2 H(+). Functionally, catalyzes the methylthiolation of an aspartic acid residue of ribosomal protein uS12. This is Ribosomal protein uS12 methylthiotransferase RimO from Sulfurihydrogenibium sp. (strain YO3AOP1).